The following is a 98-amino-acid chain: HssA/B-like protein 50 (98 aa).

Disordered regions lie at residues 1 to 26 (MTLF…SFGS) and 68 to 98 (TRGS…CCGI). The span at 84–98 (GHGGMGGGNGSCCGI) shows a compositional bias: gly residues.

Belongs to the hssA/B family.

The chain is HssA/B-like protein 50 (hssl50) from Dictyostelium discoideum (Social amoeba).